Here is a 112-residue protein sequence, read N- to C-terminus: Class I hydrophobin 17 (112 aa).

The first 19 residues, Met-1–Ala-19, serve as a signal peptide directing secretion. Disulfide bonds link Cys-30/Cys-90, Cys-37/Cys-84, Cys-38/Cys-74, and Cys-91/Cys-104. N-linked (GlcNAc...) asparagine glycosylation is present at Asn-108.

The protein belongs to the fungal hydrophobin family. Self-assembles to form functional amyloid fibrils called rodlets. Self-assembly into fibrillar rodlets occurs spontaneously at hydrophobic:hydrophilic interfaces and the rodlets further associate laterally to form amphipathic monolayers.

It is found in the secreted. The protein resides in the cell wall. Its function is as follows. Aerial growth, conidiation, and dispersal of filamentous fungi in the environment rely upon a capability of their secreting small amphipathic proteins called hydrophobins (HPBs) with low sequence identity. Class I can self-assemble into an outermost layer of rodlet bundles on aerial cell surfaces, conferring cellular hydrophobicity that supports fungal growth, development and dispersal; whereas Class II form highly ordered films at water-air interfaces through intermolecular interactions but contribute nothing to the rodlet structure. Hydph17 is a class I hydrophobin involved in mycelial growth. In Pleurotus ostreatus (strain PC15) (Oyster mushroom), this protein is Class I hydrophobin 17.